The sequence spans 71 residues: Translation initiation factor IF-1 (71 aa).

Residues 1 to 71 (MSKDDLIQFT…LTKGRVIHRH (71 aa)) enclose the S1-like domain.

This sequence belongs to the IF-1 family. In terms of assembly, component of the 30S ribosomal translation pre-initiation complex which assembles on the 30S ribosome in the order IF-2 and IF-3, IF-1 and N-formylmethionyl-tRNA(fMet); mRNA recruitment can occur at any time during PIC assembly.

It is found in the cytoplasm. In terms of biological role, one of the essential components for the initiation of protein synthesis. Stabilizes the binding of IF-2 and IF-3 on the 30S subunit to which N-formylmethionyl-tRNA(fMet) subsequently binds. Helps modulate mRNA selection, yielding the 30S pre-initiation complex (PIC). Upon addition of the 50S ribosomal subunit IF-1, IF-2 and IF-3 are released leaving the mature 70S translation initiation complex. The protein is Translation initiation factor IF-1 of Rickettsia prowazekii (strain Madrid E).